A 183-amino-acid polypeptide reads, in one-letter code: Adenine phosphoribosyltransferase (183 aa).

This sequence belongs to the purine/pyrimidine phosphoribosyltransferase family. In terms of assembly, homodimer.

It is found in the cytoplasm. The catalysed reaction is AMP + diphosphate = 5-phospho-alpha-D-ribose 1-diphosphate + adenine. It participates in purine metabolism; AMP biosynthesis via salvage pathway; AMP from adenine: step 1/1. In terms of biological role, catalyzes a salvage reaction resulting in the formation of AMP, that is energically less costly than de novo synthesis. The sequence is that of Adenine phosphoribosyltransferase from Salmonella paratyphi C (strain RKS4594).